A 438-amino-acid polypeptide reads, in one-letter code: Proline--tRNA ligase (438 aa).

It belongs to the class-II aminoacyl-tRNA synthetase family. ProS type 2 subfamily. In terms of assembly, homodimer.

The protein resides in the cytoplasm. The enzyme catalyses tRNA(Pro) + L-proline + ATP = L-prolyl-tRNA(Pro) + AMP + diphosphate. Functionally, catalyzes the attachment of proline to tRNA(Pro) in a two-step reaction: proline is first activated by ATP to form Pro-AMP and then transferred to the acceptor end of tRNA(Pro). The protein is Proline--tRNA ligase of Gluconobacter oxydans (strain 621H) (Gluconobacter suboxydans).